A 479-amino-acid chain; its full sequence is UDP-N-acetylmuramate--L-alanine ligase (479 aa).

124–130 (GSHGKTT) serves as a coordination point for ATP.

This sequence belongs to the MurCDEF family.

It localises to the cytoplasm. The catalysed reaction is UDP-N-acetyl-alpha-D-muramate + L-alanine + ATP = UDP-N-acetyl-alpha-D-muramoyl-L-alanine + ADP + phosphate + H(+). It functions in the pathway cell wall biogenesis; peptidoglycan biosynthesis. Its function is as follows. Cell wall formation. This Synechococcus sp. (strain RCC307) protein is UDP-N-acetylmuramate--L-alanine ligase.